Here is a 216-residue protein sequence, read N- to C-terminus: MOB kinase activator-like 1 homolog C (216 aa).

Zn(2+) is bound by residues Cys78, Cys83, His160, and His165.

It belongs to the MOB1/phocein family.

The chain is MOB kinase activator-like 1 homolog C (mobC) from Dictyostelium discoideum (Social amoeba).